The sequence spans 505 residues: tRNA-2-methylthio-N(6)-dimethylallyladenosine synthase (505 aa).

The 117-residue stretch at arginine 10–histidine 126 folds into the MTTase N-terminal domain. The [4Fe-4S] cluster site is built by cysteine 19, cysteine 55, cysteine 89, cysteine 163, cysteine 167, and cysteine 170. Positions arginine 149–glutamate 385 constitute a Radical SAM core domain. The TRAM domain maps to glutamine 388–valine 459.

This sequence belongs to the methylthiotransferase family. MiaB subfamily. In terms of assembly, monomer. [4Fe-4S] cluster is required as a cofactor.

Its subcellular location is the cytoplasm. The enzyme catalyses N(6)-dimethylallyladenosine(37) in tRNA + (sulfur carrier)-SH + AH2 + 2 S-adenosyl-L-methionine = 2-methylsulfanyl-N(6)-dimethylallyladenosine(37) in tRNA + (sulfur carrier)-H + 5'-deoxyadenosine + L-methionine + A + S-adenosyl-L-homocysteine + 2 H(+). Its function is as follows. Catalyzes the methylthiolation of N6-(dimethylallyl)adenosine (i(6)A), leading to the formation of 2-methylthio-N6-(dimethylallyl)adenosine (ms(2)i(6)A) at position 37 in tRNAs that read codons beginning with uridine. This Rhodococcus jostii (strain RHA1) protein is tRNA-2-methylthio-N(6)-dimethylallyladenosine synthase.